The chain runs to 325 residues: Glutarate 2-hydroxylase (325 aa).

Fe cation is bound by residues His160, Asp162, and His292.

The protein belongs to the glutarate hydroxylase family. In terms of assembly, homotetramer. Fe(2+) is required as a cofactor.

It catalyses the reaction glutarate + 2-oxoglutarate + O2 = (S)-2-hydroxyglutarate + succinate + CO2. The protein operates within amino-acid degradation. Functionally, acts as an alpha-ketoglutarate-dependent dioxygenase catalyzing hydroxylation of glutarate (GA) to L-2-hydroxyglutarate (L2HG). Functions in a L-lysine degradation pathway that proceeds via cadaverine, glutarate and L-2-hydroxyglutarate. This is Glutarate 2-hydroxylase from Klebsiella pneumoniae (strain 342).